We begin with the raw amino-acid sequence, 770 residues long: ARF GTPase-activating protein GIT1 (770 aa).

The region spanning 1 to 124 (MSRKGPRAEV…AFVHKLPCRD (124 aa)) is the Arf-GAP domain. Residues 1 to 124 (MSRKGPRAEV…AFVHKLPCRD (124 aa)) are interaction with gamma-tubulin and localization to the centrosome. The C4-type zinc finger occupies 11-34 (CADCSAPDPGWASISRGVLVCDEC). ANK repeat units follow at residues 132-161 (DLSKQLHSSVRTGNLETCLRLLSLGAQANF), 166-195 (KGTTPLHVAAKAGQTLQAELLVVYGADPGS), and 199-228 (NGRTPIDYARQAGHHELAERLVECQYELTD). Y224 is modified (phosphotyrosine). The interval 245–374 (HYIIPQMADR…QGKSLSSPTD (130 aa)) is interaction with PCLO. The tract at residues 253 to 424 (DRSRQKCMSQ…NRARSMDSSD (172 aa)) is interaction with PTK2/FAK1. An interaction with ARHGEF7 region spans residues 254 to 376 (RSRQKCMSQS…KSLSSPTDNL (123 aa)). Residues 363–425 (RQQGKSLSSP…RARSMDSSDL (63 aa)) form a disordered region. Polar residues predominate over residues 366-383 (GKSLSSPTDNLELSARNQ). Phosphoserine occurs at positions 368 and 371. Position 373 is a phosphothreonine (T373). The interval 375–596 (NLELSARNQS…QEGSRHASKL (222 aa)) is interaction with NCK2 and GRIN3A. Residues 375–596 (NLELSARNQS…QEGSRHASKL (222 aa)) are required for localization at synapses. Phosphoserine occurs at positions 379 and 384. Position 392 is a phosphotyrosine (Y392). Residues S394 and S397 each carry the phosphoserine modification. The span at 394-403 (SVASDEDTDQ) shows a compositional bias: acidic residues. T401 is subject to Phosphothreonine. Residues S419, S422, and S426 each carry the phosphoserine modification. The interaction with MAPK1 stretch occupies residues 420 to 475 (MDSSDLSDGAVTLQEYLELKKALATSEAKVQQLMKVNSSLSDELRKLQREIHKLQA). Positions 429–629 (AVTLQEYLEL…EGKRFLELSK (201 aa)) are interaction with IKBKG. A coiled-coil region spans residues 449–483 (VQQLMKVNSSLSDELRKLQREIHKLQAENLQLRQP). Phosphoserine occurs at positions 507 and 545. T546 is subject to Phosphothreonine. Residues Y554 and Y563 each carry the phosphotyrosine modification. A phosphoserine mark is found at S570, S580, S601, and S605. Positions 574–586 (VTFTPSSPLLSSS) are enriched in low complexity. Residues 574 to 615 (VTFTPSSPLLSSSQEGSRHASKLSRHGSGAESDYENTQSGEP) are disordered. Position 610 is a phosphothreonine (T610). A Phosphoserine modification is found at S639. The segment at 646 to 770 (PGLPSTEDVI…VTITTREKKQ (125 aa)) is interaction with PXN and TGFB1I1.

In terms of assembly, forms homodimers and possibly oligomers. May form heterooligomers with GIT2. Interacts with G protein-coupled receptor kinases, including GRK2, GRK3, GRK5 and GRK6. Interacts with PPFIA1, PPFIA2 and PPFIA4. Interacts with GRIP1 and forms a ternary complex with PPFIA1 and GRIP1. Directly interacts with ARHGEF7/beta-PIX, forming in vitro a heptameric complex made of a GIT1 dimer and an ARHGEF7 trimer. Directly interacts with PXN/paxillin; this interaction is enhanced in the presence of ARHGEF7. Directly interacts (via C-terminus) with TGFB1I1/Hic-5 (via LD motif 3). Directly interacts with PTK2/FAK1. May interact with PTK2B/PYK2; this interaction may be indirect. Interacts with AMPA receptors GRIA2/3. Directly interacts with protein Piccolo/PCLO. Forms a complex with Ephrin-B1/EFNB1 and NCK2/GRB4 (via SH2); this interaction is important for spine morphogenesis and synapse formation. Interaction with NCK2 is transient and depends upon GIT1 phosphorylation at Tyr-392. Interacts with GRIN3A/GluN3A (via C-terminus); this interaction competes with GIT1 interaction with ARHGEF7 and limits synaptic localization of GIT1. Interacts with IKBKG/NEMO in resting bone mesenchymal stem cells, as well as in TNF-stimulated cells; this interaction may increase IKBKG affinity for 'Lys-63'-linked polyubiquitin chains. Interacts with GABA(A) receptors, including GABRB3 and GABRG2. Interacts with SCRIB. Interacts (via N- and C-terminus) with ENTR1/SDCCAG3 (via N-terminus); this interaction is direct. May form a tripartite complex with ENTR1 and PTPN13. Interacts with YWHAZ. Interacts with PAK1 and PAK3. Directly interacts (via N-terminus) with gamma-tubulin. Interacts with MAPK1 and MAPK3; this interaction is required for MAPK1/3 recruitment to focal adhesions. Post-translationally, phosphorylated on tyrosine residues by PTK2/FAK1 and SRC in growing fibroblasts. Phosphorylation at Tyr-392 is induced by activation of Ephrin-B1/EFNB1 and catalyzed by SRC family kinases. It is required for the interaction with NCK2 and for GIT1 recruitment to synapses in hippocampal neurons. As to expression, widely expressed. Expressed at high levels in testis (at protein level). Expressed in the brain, including in CA1 hippocampal neurons, in the amygdala, and thalamic nuclei (at protein level).

The protein localises to the cytoplasm. It is found in the synapse. Its subcellular location is the presynapse. The protein resides in the postsynapse. It localises to the postsynaptic density. The protein localises to the cell junction. It is found in the focal adhesion. Its subcellular location is the cell projection. The protein resides in the lamellipodium. It localises to the cytoskeleton. The protein localises to the microtubule organizing center. It is found in the centrosome. Its subcellular location is the spindle pole. GTPase-activating protein for ADP ribosylation factor family members, including ARF1. Multidomain scaffold protein that interacts with numerous proteins and therefore participates in many cellular functions, including receptor internalization, focal adhesion remodeling, and signaling by both G protein-coupled receptors and tyrosine kinase receptors. Through PAK1 activation, positively regulates microtubule nucleation during interphase. Plays a role in the regulation of cytokinesis; for this function, may act in a pathway also involving ENTR1 and PTPN13. May promote cell motility both by regulating focal complex dynamics and by the activation of RAC1. May act as scaffold for MAPK1/3 signal transduction, recruiting MAPK1/3 to focal adhesions after EGF stimulation via a Src-dependent pathway, hence stimulating cell migration. Plays a role in brain development and function. Involved in the regulation of spine density and synaptic plasticity that is required for processes involved in learning. Plays an important role in dendritic spine morphogenesis and synapse formation. In hippocampal neurons, recruits guanine nucleotide exchange factors (GEFs), such as ARHGEF7/beta-PIX, to the synaptic membrane. These in turn locally activate RAC1, which is an essential step for spine morphogenesis and synapse formation. May contribute to the organization of presynaptic active zones through oligomerization and formation of a Piccolo/PCLO-based protein network, which includes ARHGEF7/beta-PIX and FAK1. In neurons, through its interaction with liprin-alpha family members, may be required for AMPA receptor (GRIA2/3) proper targeting to the cell membrane. In complex with GABA(A) receptors and ARHGEF7, plays a crucial role in regulating GABA(A) receptor synaptic stability, maintaining GPHN/gephyrin scaffolds and hence GABAergic inhibitory synaptic transmission, by locally coordinating RAC1 and PAK1 downstream effector activity, leading to F-actin stabilization. May also be important for RAC1 downstream signaling pathway through PAK3 and regulation of neuronal inhibitory transmission at presynaptic input. Required for successful bone regeneration during fracture healing. The function in intramembranous ossification may, at least partly, exerted by macrophages in which GIT1 is a key negative regulator of redox homeostasis, IL1B production, and glycolysis, acting through the ERK1/2/NRF2/NFE2L2 axis. May also play a role in angiogenesis during fracture healing. In this process, may regulate activation of the canonical NF-kappa-B signal in bone mesenchymal stem cells by enhancing the interaction between NEMO and 'Lys-63'-ubiquitinated RIPK1/RIP1, eventually leading to enhanced production of VEGFA and others angiogenic factors. Essential for VEGF signaling through the activation of phospholipase C-gamma and ERK1/2, hence may control endothelial cell proliferation and angiogenesis. The protein is ARF GTPase-activating protein GIT1 of Rattus norvegicus (Rat).